Here is a 258-residue protein sequence, read N- to C-terminus: Snake venom serine protease KN12 (258 aa).

Positions 1-18 are cleaved as a signal peptide; sequence MVLIRVLANLLILQLSYA. Positions 19-24 are excised as a propeptide; it reads QRSSEL. The region spanning 25–249 is the Peptidase S1 domain; sequence VIGGDECNIN…HLDWIQNIIA (225 aa). 6 cysteine pairs are disulfide-bonded: Cys31-Cys163, Cys50-Cys66, Cys98-Cys256, Cys142-Cys210, Cys174-Cys189, and Cys200-Cys225. His65 serves as the catalytic Charge relay system. The N-linked (GlcNAc...) asparagine glycan is linked to Asn103. The Charge relay system role is filled by Asp110. Residues Asn121, Asn122, Asn154, and Asn170 are each glycosylated (N-linked (GlcNAc...) asparagine). Ser204 (charge relay system) is an active-site residue. An N-linked (GlcNAc...) asparagine glycan is attached at Asn251.

Belongs to the peptidase S1 family. Snake venom subfamily. As to quaternary structure, monomer. In terms of tissue distribution, expressed by the venom gland.

It localises to the secreted. Functionally, snake venom serine protease that may act in the hemostasis system of the prey. The sequence is that of Snake venom serine protease KN12 from Trimeresurus stejnegeri (Chinese green tree viper).